Here is a 279-residue protein sequence, read N- to C-terminus: Ribosomal RNA small subunit methyltransferase A (279 aa).

6 residues coordinate S-adenosyl-L-methionine: Asn25, Leu27, Gly52, Glu73, Asp98, and Asn120.

This sequence belongs to the class I-like SAM-binding methyltransferase superfamily. rRNA adenine N(6)-methyltransferase family. RsmA subfamily.

Its subcellular location is the cytoplasm. The enzyme catalyses adenosine(1518)/adenosine(1519) in 16S rRNA + 4 S-adenosyl-L-methionine = N(6)-dimethyladenosine(1518)/N(6)-dimethyladenosine(1519) in 16S rRNA + 4 S-adenosyl-L-homocysteine + 4 H(+). In terms of biological role, specifically dimethylates two adjacent adenosines (A1518 and A1519) in the loop of a conserved hairpin near the 3'-end of 16S rRNA in the 30S particle. May play a critical role in biogenesis of 30S subunits. This Magnetococcus marinus (strain ATCC BAA-1437 / JCM 17883 / MC-1) protein is Ribosomal RNA small subunit methyltransferase A.